The sequence spans 238 residues: Ribonuclease PH (238 aa).

Residues Arg86 and 124–126 (GTR) contribute to the phosphate site.

It belongs to the RNase PH family. In terms of assembly, homohexameric ring arranged as a trimer of dimers.

The catalysed reaction is tRNA(n+1) + phosphate = tRNA(n) + a ribonucleoside 5'-diphosphate. Functionally, phosphorolytic 3'-5' exoribonuclease that plays an important role in tRNA 3'-end maturation. Removes nucleotide residues following the 3'-CCA terminus of tRNAs; can also add nucleotides to the ends of RNA molecules by using nucleoside diphosphates as substrates, but this may not be physiologically important. Probably plays a role in initiation of 16S rRNA degradation (leading to ribosome degradation) during starvation. This chain is Ribonuclease PH, found in Parvibaculum lavamentivorans (strain DS-1 / DSM 13023 / NCIMB 13966).